Consider the following 223-residue polypeptide: 7-cyano-7-deazaguanine synthase (223 aa).

8–18 (MSGGMDSTLCA) contributes to the ATP binding site. Positions 187, 195, 198, and 201 each coordinate Zn(2+).

Belongs to the QueC family. Zn(2+) is required as a cofactor.

The enzyme catalyses 7-carboxy-7-deazaguanine + NH4(+) + ATP = 7-cyano-7-deazaguanine + ADP + phosphate + H2O + H(+). It functions in the pathway purine metabolism; 7-cyano-7-deazaguanine biosynthesis. Catalyzes the ATP-dependent conversion of 7-carboxy-7-deazaguanine (CDG) to 7-cyano-7-deazaguanine (preQ(0)). In Campylobacter curvus (strain 525.92), this protein is 7-cyano-7-deazaguanine synthase.